Reading from the N-terminus, the 140-residue chain is 3-hydroxyacyl-[acyl-carrier-protein] dehydratase FabZ (140 aa).

Residue H48 is part of the active site.

This sequence belongs to the thioester dehydratase family. FabZ subfamily.

It localises to the cytoplasm. It carries out the reaction a (3R)-hydroxyacyl-[ACP] = a (2E)-enoyl-[ACP] + H2O. In terms of biological role, involved in unsaturated fatty acids biosynthesis. Catalyzes the dehydration of short chain beta-hydroxyacyl-ACPs and long chain saturated and unsaturated beta-hydroxyacyl-ACPs. In Ligilactobacillus salivarius (strain UCC118) (Lactobacillus salivarius), this protein is 3-hydroxyacyl-[acyl-carrier-protein] dehydratase FabZ.